The primary structure comprises 138 residues: Actin-related protein 2/3 complex subunit 5 (138 aa).

The interval 1–21 (MNYEDDNVESGQAGKSDAEYK) is disordered.

It belongs to the ARPC5 family. Component of the Arp2/3 complex composed of arpB/Arp2, arpC/Arp3, arcA/p41-arc, arcB/p34-arc, arcC/p21-arc, arcD/p20-arc and arcE/p16-arc. Interacts with carmil (via the region between the LRR domain and COOH-terminal proline-rich domain); carmil is required for Arp2/3-dependent actin nucleation. Arp2/3 complex, MyoB, MyoC, and the alpha and beta subunits of capping protein all form a larger complex with carmil.

The protein localises to the cytoplasm. It localises to the cytoskeleton. Its subcellular location is the cytosol. The protein resides in the cell cortex. It is found in the cell projection. The protein localises to the pseudopodium. Functions as a component of the Arp2/3 complex which is involved in regulation of actin polymerization and together with an activating nucleation-promoting factor (NPF) mediates the formation of branched actin networks. Seems to contact the pointed end of the daughter actin filament. The Arp2/3 complex is involved in organizing the actin system in cell motility and chemotaxis, in phagocytosis and macropinocytosis, at late steps of endosome processing, and in mitosis. In concert with a group of other proteins, the Arp2/3 complex plays a general role in the rapid activation and adaptation of the actin system to its multiple functions. The protein is Actin-related protein 2/3 complex subunit 5 (arcE) of Dictyostelium discoideum (Social amoeba).